The sequence spans 304 residues: Glycine--tRNA ligase alpha subunit (304 aa).

This sequence belongs to the class-II aminoacyl-tRNA synthetase family. In terms of assembly, tetramer of two alpha and two beta subunits.

The protein localises to the cytoplasm. It carries out the reaction tRNA(Gly) + glycine + ATP = glycyl-tRNA(Gly) + AMP + diphosphate. In Serratia proteamaculans (strain 568), this protein is Glycine--tRNA ligase alpha subunit.